The following is a 335-amino-acid chain: 3-dehydroquinate synthase (335 aa).

NAD(+) contacts are provided by residues 56 to 61, 90 to 94, 114 to 115, Lys-127, Lys-135, and 153 to 156; these read DGEKYK, GVITD, TT, and FLKT. 3 residues coordinate Zn(2+): Glu-168, His-227, and His-243.

It belongs to the sugar phosphate cyclases superfamily. Dehydroquinate synthase family. NAD(+) is required as a cofactor. Requires Co(2+) as cofactor. The cofactor is Zn(2+).

Its subcellular location is the cytoplasm. It catalyses the reaction 7-phospho-2-dehydro-3-deoxy-D-arabino-heptonate = 3-dehydroquinate + phosphate. The protein operates within metabolic intermediate biosynthesis; chorismate biosynthesis; chorismate from D-erythrose 4-phosphate and phosphoenolpyruvate: step 2/7. Its function is as follows. Catalyzes the conversion of 3-deoxy-D-arabino-heptulosonate 7-phosphate (DAHP) to dehydroquinate (DHQ). The sequence is that of 3-dehydroquinate synthase from Pyrococcus furiosus (strain ATCC 43587 / DSM 3638 / JCM 8422 / Vc1).